A 368-amino-acid chain; its full sequence is 1-aminocyclopropane-1-carboxylate synthase (368 aa).

At lysine 230 the chain carries N6-(pyridoxal phosphate)lysine.

This sequence belongs to the class-I pyridoxal-phosphate-dependent aminotransferase family. Homodimer. Pyridoxal 5'-phosphate serves as cofactor.

The catalysed reaction is S-adenosyl-L-methionine = 1-aminocyclopropane-1-carboxylate + S-methyl-5'-thioadenosine + H(+). It functions in the pathway alkene biosynthesis; ethylene biosynthesis via S-adenosyl-L-methionine; ethylene from S-adenosyl-L-methionine: step 1/2. In terms of biological role, catalyzes the formation of 1-aminocyclopropane-1-carboxylate, a direct precursor of ethylene in higher plants. This is 1-aminocyclopropane-1-carboxylate synthase (ACS5) from Vigna radiata var. radiata (Mung bean).